The chain runs to 657 residues: LIM and SH3 domain protein Lasp (657 aa).

The region spanning 3–63 (KTCARCQKVV…EAHIPKAKAT (61 aa)) is the LIM zinc-binding domain. Nebulin repeat units lie at residues 64–95 (AIAD…KAKG) and 96–130 (KFTQ…KKAA). 6 disordered regions span residues 130–151 (AMEK…EYFS), 164–223 (PTAS…PIQH), 235–257 (YQQL…QLHD), 294–318 (LYPT…QQQA), 332–415 (NSHH…SAAS), and 460–528 (KQHA…PKRI). Over residues 140–150 (VSDSSNESEYF) the composition is skewed to polar residues. 2 stretches are compositionally biased toward low complexity: residues 172 to 215 (AATT…QQQT) and 236 to 254 (QQLQ…QQQQ). Over residues 332-341 (NSHHPSGNSV) the composition is skewed to polar residues. A compositionally biased stretch (low complexity) spans 342–357 (DQYDQPQQQQHQPQQQ). Residues 358-370 (STNPTLVAAQQQQ) show a composition bias toward polar residues. A compositionally biased stretch (low complexity) spans 371-403 (SHHSLLNNNASNGGISHSHHSNINNNGHGSQNQ). Residues 460–475 (KQHASNGHMPNQQQQH) show a composition bias toward polar residues. A phosphoserine mark is found at serine 505 and serine 530. The tract at residues 548–592 (EQAHQQQKHQQYYQQVQMMQQQEHPPQQQQMRQQPSYSSLQEKQS) is disordered. Low complexity predominate over residues 549–586 (QAHQQQKHQQYYQQVQMMQQQEHPPQQQQMRQQPSYSS). An SH3 domain is found at 596–657 (TAMRVYRAIY…PANYVEQAVI (62 aa)).

Interacts with osk.

This is LIM and SH3 domain protein Lasp from Drosophila melanogaster (Fruit fly).